The chain runs to 1071 residues: Carbamoyl phosphate synthase large chain (1071 aa).

The carboxyphosphate synthetic domain stretch occupies residues 1–403 (MPKRTDLKSI…SFQKALRGLE (403 aa)). Arg129, Arg169, Gly175, Gly176, Gln208, Val210, Glu215, Gly241, Val242, His243, Gln285, and Glu299 together coordinate ATP. The ATP-grasp 1 domain maps to 133-328 (KEAMEKIGLS…IAKVAAKLAV (196 aa)). Residues Gln285, Glu299, and Asn301 each contribute to the Mg(2+) site. Mn(2+) contacts are provided by Gln285, Glu299, and Asn301. Residues 404–548 (TGLCGFNPRS…YSTYEEECES (145 aa)) are oligomerization domain. Positions 549–930 (RPSDRKKVMI…AYYKAQLGAG (382 aa)) are carbamoyl phosphate synthetic domain. The 192-residue stretch at 673–864 (QKVLNDLGLR…LAKVGARCMA (192 aa)) folds into the ATP-grasp 2 domain. ATP is bound by residues Arg709, Phe748, Leu750, Glu755, Gly780, Ile781, His782, Ser783, Gln823, and Glu835. Positions 823, 835, and 837 each coordinate Mg(2+). Positions 823, 835, and 837 each coordinate Mn(2+). Residues 931-1071 (ERLNPTGKIF…ELHGRLKNRN (141 aa)) enclose the MGS-like domain. Positions 931-1071 (ERLNPTGKIF…ELHGRLKNRN (141 aa)) are allosteric domain.

The protein belongs to the CarB family. In terms of assembly, composed of two chains; the small (or glutamine) chain promotes the hydrolysis of glutamine to ammonia, which is used by the large (or ammonia) chain to synthesize carbamoyl phosphate. Tetramer of heterodimers (alpha,beta)4. The cofactor is Mg(2+). Mn(2+) is required as a cofactor.

The enzyme catalyses hydrogencarbonate + L-glutamine + 2 ATP + H2O = carbamoyl phosphate + L-glutamate + 2 ADP + phosphate + 2 H(+). It catalyses the reaction hydrogencarbonate + NH4(+) + 2 ATP = carbamoyl phosphate + 2 ADP + phosphate + 2 H(+). The protein operates within amino-acid biosynthesis; L-arginine biosynthesis; carbamoyl phosphate from bicarbonate: step 1/1. Its pathway is pyrimidine metabolism; UMP biosynthesis via de novo pathway; (S)-dihydroorotate from bicarbonate: step 1/3. Its function is as follows. Large subunit of the glutamine-dependent carbamoyl phosphate synthetase (CPSase). CPSase catalyzes the formation of carbamoyl phosphate from the ammonia moiety of glutamine, carbonate, and phosphate donated by ATP, constituting the first step of 2 biosynthetic pathways, one leading to arginine and/or urea and the other to pyrimidine nucleotides. The large subunit (synthetase) binds the substrates ammonia (free or transferred from glutamine from the small subunit), hydrogencarbonate and ATP and carries out an ATP-coupled ligase reaction, activating hydrogencarbonate by forming carboxy phosphate which reacts with ammonia to form carbamoyl phosphate. The protein is Carbamoyl phosphate synthase large chain of Neisseria meningitidis serogroup B (strain ATCC BAA-335 / MC58).